Reading from the N-terminus, the 174-residue chain is MARKNQKAPWEPEEEIIWVSKSEMKRDMEELQKLGEELVGLKPAVLDKFPLSEDLREAVADAQRFKNEARRRQLQRIGKLMRYEDPEPIQAALDKIRNKHSQATAALHKLEALRDRVVEEGDKAIDDVMELYPEADRQRLRQLARQAAKEKKAGKPAKSYREIFQILKAFEEEM.

It belongs to the DarP family.

The protein localises to the cytoplasm. Its function is as follows. Member of a network of 50S ribosomal subunit biogenesis factors which assembles along the 30S-50S interface, preventing incorrect 23S rRNA structures from forming. Promotes peptidyl transferase center (PTC) maturation. In Vibrio campbellii (strain ATCC BAA-1116), this protein is Dual-action ribosomal maturation protein DarP.